Reading from the N-terminus, the 197-residue chain is Probable nicotinate-nucleotide adenylyltransferase (197 aa).

This sequence belongs to the NadD family.

The enzyme catalyses nicotinate beta-D-ribonucleotide + ATP + H(+) = deamido-NAD(+) + diphosphate. Its pathway is cofactor biosynthesis; NAD(+) biosynthesis; deamido-NAD(+) from nicotinate D-ribonucleotide: step 1/1. In terms of biological role, catalyzes the reversible adenylation of nicotinate mononucleotide (NaMN) to nicotinic acid adenine dinucleotide (NaAD). The polypeptide is Probable nicotinate-nucleotide adenylyltransferase (Thermosipho melanesiensis (strain DSM 12029 / CIP 104789 / BI429)).